The chain runs to 123 residues: Small ribosomal subunit protein uS12 (123 aa).

Residues 1–32 (MPTIQQLVRKGRTDKISKNKTPALKGSPQRRG) are disordered. Asp-89 is modified (3-methylthioaspartic acid). Residues 103-123 (DTQGVKGRKQARSRYGAKKEK) are disordered. Residues 108–123 (KGRKQARSRYGAKKEK) are compositionally biased toward basic residues.

This sequence belongs to the universal ribosomal protein uS12 family. As to quaternary structure, part of the 30S ribosomal subunit. Contacts proteins S8 and S17. May interact with IF1 in the 30S initiation complex.

Functionally, with S4 and S5 plays an important role in translational accuracy. Its function is as follows. Interacts with and stabilizes bases of the 16S rRNA that are involved in tRNA selection in the A site and with the mRNA backbone. Located at the interface of the 30S and 50S subunits, it traverses the body of the 30S subunit contacting proteins on the other side and probably holding the rRNA structure together. The combined cluster of proteins S8, S12 and S17 appears to hold together the shoulder and platform of the 30S subunit. In Cutibacterium acnes (strain DSM 16379 / KPA171202) (Propionibacterium acnes), this protein is Small ribosomal subunit protein uS12.